Consider the following 418-residue polypeptide: Actin-related protein 3 (418 aa).

A2 carries the N-acetylalanine modification. Residues K240, K244, K251, and K254 each carry the N6-acetyllysine modification.

It belongs to the actin family. ARP3 subfamily. Component of the Arp2/3 complex composed of ACTR2/ARP2, ACTR3/ARP3, ARPC1B/p41-ARC, ARPC2/p34-ARC, ARPC3/p21-ARC, ARPC4/p20-ARC and ARPC5/p16-ARC. Interacts with WHDC1. Interacts weakly with MEFV. Interacts with AVIL. As to quaternary structure, (Microbial infection) Interacts with bacterium B.thailandensis BimA.

The protein resides in the cytoplasm. Its subcellular location is the cytoskeleton. It localises to the cell projection. It is found in the nucleus. Functionally, ATP-binding component of the Arp2/3 complex, a multiprotein complex that mediates actin polymerization upon stimulation by nucleation-promoting factor (NPF). The Arp2/3 complex mediates the formation of branched actin networks in the cytoplasm, providing the force for cell motility. Seems to contact the pointed end of the daughter actin filament. In podocytes, required for the formation of lamellipodia downstream of AVIL and PLCE1 regulation. In addition to its role in the cytoplasmic cytoskeleton, the Arp2/3 complex also promotes actin polymerization in the nucleus, thereby regulating gene transcription and repair of damaged DNA. The Arp2/3 complex promotes homologous recombination (HR) repair in response to DNA damage by promoting nuclear actin polymerization, leading to drive motility of double-strand breaks (DSBs). Plays a role in ciliogenesis. The sequence is that of Actin-related protein 3 (Actr3) from Mus musculus (Mouse).